Here is a 189-residue protein sequence, read N- to C-terminus: Protein OXIDATIVE STRESS 3 LIKE 2 (189 aa).

Disordered regions lie at residues 22-49 and 128-147; these read SSSTSSDSIGENSDDDEGGENEIESSYN and AMSQREGDSSSSGDDSLPTL. The segment covering 33-44 has biased composition (acidic residues); it reads NSDDDEGGENEI.

Its subcellular location is the nucleus. The polypeptide is Protein OXIDATIVE STRESS 3 LIKE 2 (Arabidopsis thaliana (Mouse-ear cress)).